Reading from the N-terminus, the 176-residue chain is ATP synthase subunit b (176 aa).

Residues 27–47 traverse the membrane as a helical segment; sequence FFVFSFLTLILVVTIVTLLVY.

It belongs to the ATPase B chain family. As to quaternary structure, F-type ATPases have 2 components, F(1) - the catalytic core - and F(0) - the membrane proton channel. F(1) has five subunits: alpha(3), beta(3), gamma(1), delta(1), epsilon(1). F(0) has three main subunits: a(1), b(2) and c(10-14). The alpha and beta chains form an alternating ring which encloses part of the gamma chain. F(1) is attached to F(0) by a central stalk formed by the gamma and epsilon chains, while a peripheral stalk is formed by the delta and b chains.

It is found in the cell membrane. F(1)F(0) ATP synthase produces ATP from ADP in the presence of a proton or sodium gradient. F-type ATPases consist of two structural domains, F(1) containing the extramembraneous catalytic core and F(0) containing the membrane proton channel, linked together by a central stalk and a peripheral stalk. During catalysis, ATP synthesis in the catalytic domain of F(1) is coupled via a rotary mechanism of the central stalk subunits to proton translocation. Functionally, component of the F(0) channel, it forms part of the peripheral stalk, linking F(1) to F(0). The chain is ATP synthase subunit b from Metamycoplasma arthritidis (strain 158L3-1) (Mycoplasma arthritidis).